Consider the following 174-residue polypeptide: uncharacterized protein (174 aa).

A helical transmembrane segment spans residues 7 to 24 (LLLLAFAVCLAVGFSGCL).

The protein resides in the membrane. This is an uncharacterized protein from Methanocaldococcus jannaschii (strain ATCC 43067 / DSM 2661 / JAL-1 / JCM 10045 / NBRC 100440) (Methanococcus jannaschii).